Reading from the N-terminus, the 141-residue chain is Nucleoside triphosphatase NudI (141 aa).

The Nudix hydrolase domain maps to Met1–Leu141. The Nudix box signature appears at Gly38–Gly59.

Belongs to the Nudix hydrolase family. NudI subfamily. In terms of assembly, monomer. The cofactor is Mg(2+).

The enzyme catalyses a ribonucleoside 5'-triphosphate + H2O = a ribonucleoside 5'-phosphate + diphosphate + H(+). It catalyses the reaction a 2'-deoxyribonucleoside 5'-triphosphate + H2O = a 2'-deoxyribonucleoside 5'-phosphate + diphosphate + H(+). It carries out the reaction dUTP + H2O = dUMP + diphosphate + H(+). The catalysed reaction is dTTP + H2O = dTMP + diphosphate + H(+). The enzyme catalyses dCTP + H2O = dCMP + diphosphate + H(+). Its function is as follows. Catalyzes the hydrolysis of nucleoside triphosphates, with a preference for pyrimidine deoxynucleoside triphosphates (dUTP, dTTP and dCTP). The sequence is that of Nucleoside triphosphatase NudI from Klebsiella pneumoniae (strain 342).